Consider the following 587-residue polypeptide: Sorting nexin 2A (587 aa).

Disordered regions lie at residues 1 to 78 (MMGS…DSDP) and 115 to 151 (SPFD…SSSD). Composition is skewed to polar residues over residues 42 to 59 (NGDT…TLSN) and 123 to 134 (SEINGTEDNSLH). The segment covering 135–150 (SQFSDSLSRSPSSSSS) has biased composition (low complexity). Position 144 is a phosphoserine (Ser-144). The PX domain occupies 157–277 (VSNPQKEQEI…KVFLQVQGKL (121 aa)). Arg-201, Lys-227, and Arg-244 together coordinate a 1,2-diacyl-sn-glycero-3-phospho-(1D-myo-inositol-3-phosphate). One can recognise a BAR domain in the interval 331 to 586 (LRQSVSNDWG…TSQYDREKQS (256 aa)).

Belongs to the sorting nexin family. As to quaternary structure, homodimer. Heterodimer with SNX1 or SNX2A. Component of the retromer complex which consists of VPS29 (MAG1), VPS26 (VPS26A or VPS26B), VPS35 (VPS35A or VPS35B or VPS35C), VPS5/17 (SNX1 or SNX2A or SNX2B). In terms of tissue distribution, ubiquitously expressed but at a lower level in flowers, siliques, and senescing leaves.

It localises to the cytoplasm. Its subcellular location is the endosome membrane. The protein localises to the prevacuolar compartment membrane. It is found in the golgi apparatus. The protein resides in the trans-Golgi network membrane. Its function is as follows. Plays a role in vesicular protein sorting. Acts at the crossroads between the secretory and endocytic pathways. Is involved in the endosome to vacuole protein transport and, as component of the membrane-associated retromer complex, is also involved in endosome-to-Golgi retrograde transport. Also involved in the efficient sorting of seed storage protein globulin 12S. The polypeptide is Sorting nexin 2A (SNX2A) (Arabidopsis thaliana (Mouse-ear cress)).